A 211-amino-acid chain; its full sequence is Large ribosomal subunit protein eL13 (211 aa).

The protein belongs to the eukaryotic ribosomal protein eL13 family. As to quaternary structure, component of the 60S large ribosomal subunit (LSU).

The protein resides in the cytoplasm. Its function is as follows. Component of the ribosome, a large ribonucleoprotein complex responsible for the synthesis of proteins in the cell. The small ribosomal subunit (SSU) binds messenger RNAs (mRNAs) and translates the encoded message by selecting cognate aminoacyl-transfer RNA (tRNA) molecules. The large subunit (LSU) contains the ribosomal catalytic site termed the peptidyl transferase center (PTC), which catalyzes the formation of peptide bonds, thereby polymerizing the amino acids delivered by tRNAs into a polypeptide chain. The nascent polypeptides leave the ribosome through a tunnel in the LSU and interact with protein factors that function in enzymatic processing, targeting, and the membrane insertion of nascent chains at the exit of the ribosomal tunnel. As part of the LSU, it is probably required for its formation and the maturation of rRNAs. The chain is Large ribosomal subunit protein eL13 (rpl13) from Ictalurus punctatus (Channel catfish).